Reading from the N-terminus, the 148-residue chain is uncharacterized protein (148 aa).

Disordered regions lie at residues 1–86 (MCPP…VQSP) and 122–148 (RAHR…TSPC). Basic residues predominate over residues 38–57 (RPPKMQRRPRPPVAKRRRFP). The segment covering 134–148 (QSRQRPSPDSQTSPC) has biased composition (polar residues).

This sequence belongs to the Epstein-Barr virus BLLF2 family.

This is an uncharacterized protein from Homo sapiens (Human).